The chain runs to 535 residues: Probable acyl-activating enzyme 22 (535 aa).

Belongs to the ATP-dependent AMP-binding enzyme family.

Functionally, may act as an acid--thiol ligase that activates carboxylic acids by forming acyl-CoAs. The polypeptide is Probable acyl-activating enzyme 22 (AEE22) (Arabidopsis thaliana (Mouse-ear cress)).